Consider the following 60-residue polypeptide: UPF0434 protein Rfer_3156 (60 aa).

Belongs to the UPF0434 family.

This Albidiferax ferrireducens (strain ATCC BAA-621 / DSM 15236 / T118) (Rhodoferax ferrireducens) protein is UPF0434 protein Rfer_3156.